Here is a 494-residue protein sequence, read N- to C-terminus: UDP-N-acetylmuramate--L-alanine ligase (494 aa).

122–128 (GTHGKTT) is an ATP binding site.

The protein belongs to the MurCDEF family.

The protein localises to the cytoplasm. It catalyses the reaction UDP-N-acetyl-alpha-D-muramate + L-alanine + ATP = UDP-N-acetyl-alpha-D-muramoyl-L-alanine + ADP + phosphate + H(+). It participates in cell wall biogenesis; peptidoglycan biosynthesis. Functionally, cell wall formation. This Mycobacterium bovis (strain ATCC BAA-935 / AF2122/97) protein is UDP-N-acetylmuramate--L-alanine ligase.